The sequence spans 239 residues: Large ribosomal subunit protein uL1 (239 aa).

It belongs to the universal ribosomal protein uL1 family. In terms of assembly, part of the 50S ribosomal subunit.

Functionally, binds directly to 23S rRNA. The L1 stalk is quite mobile in the ribosome, and is involved in E site tRNA release. Its function is as follows. Protein L1 is also a translational repressor protein, it controls the translation of the L11 operon by binding to its mRNA. The polypeptide is Large ribosomal subunit protein uL1 (Rickettsia africae (strain ESF-5)).